The sequence spans 115 residues: Peptidyl-tRNA hydrolase (115 aa).

Belongs to the PTH2 family.

It localises to the cytoplasm. It catalyses the reaction an N-acyl-L-alpha-aminoacyl-tRNA + H2O = an N-acyl-L-amino acid + a tRNA + H(+). In terms of biological role, the natural substrate for this enzyme may be peptidyl-tRNAs which drop off the ribosome during protein synthesis. This Methanococcoides burtonii (strain DSM 6242 / NBRC 107633 / OCM 468 / ACE-M) protein is Peptidyl-tRNA hydrolase.